The sequence spans 661 residues: UvrABC system protein B (661 aa).

The Helicase ATP-binding domain occupies 25–178; sequence EGILKGEKFQ…DEVIRDLIRM (154 aa). 38-45 lines the ATP pocket; it reads GVTGSGKT. A Beta-hairpin motif is present at residues 91–114; it reads YYDYYQPEAYIPETDTYIEKDSSI. The region spanning 429-591 is the Helicase C-terminal domain; it reads QIDHLIGEIR…IVPQTVRKGI (163 aa). The 36-residue stretch at 625 to 660 folds into the UVR domain; that stretch reads EEYIKELEQEMKKLAIELEFEKAAKVRDKIFELKKL.

The protein belongs to the UvrB family. As to quaternary structure, forms a heterotetramer with UvrA during the search for lesions. Interacts with UvrC in an incision complex.

It localises to the cytoplasm. Its function is as follows. The UvrABC repair system catalyzes the recognition and processing of DNA lesions. A damage recognition complex composed of 2 UvrA and 2 UvrB subunits scans DNA for abnormalities. Upon binding of the UvrA(2)B(2) complex to a putative damaged site, the DNA wraps around one UvrB monomer. DNA wrap is dependent on ATP binding by UvrB and probably causes local melting of the DNA helix, facilitating insertion of UvrB beta-hairpin between the DNA strands. Then UvrB probes one DNA strand for the presence of a lesion. If a lesion is found the UvrA subunits dissociate and the UvrB-DNA preincision complex is formed. This complex is subsequently bound by UvrC and the second UvrB is released. If no lesion is found, the DNA wraps around the other UvrB subunit that will check the other stand for damage. The polypeptide is UvrABC system protein B (Caldicellulosiruptor bescii (strain ATCC BAA-1888 / DSM 6725 / KCTC 15123 / Z-1320) (Anaerocellum thermophilum)).